We begin with the raw amino-acid sequence, 200 residues long: Glycerol-3-phosphate acyltransferase (200 aa).

Helical transmembrane passes span 1–21, 84–104, 116–136, and 159–179; these read MITV…FAVV, VIAG…FLAF, ILLG…MVVA, and FLLE…LLIL.

Belongs to the PlsY family. As to quaternary structure, probably interacts with PlsX.

The protein resides in the cell inner membrane. It catalyses the reaction an acyl phosphate + sn-glycerol 3-phosphate = a 1-acyl-sn-glycero-3-phosphate + phosphate. It participates in lipid metabolism; phospholipid metabolism. Catalyzes the transfer of an acyl group from acyl-phosphate (acyl-PO(4)) to glycerol-3-phosphate (G3P) to form lysophosphatidic acid (LPA). This enzyme utilizes acyl-phosphate as fatty acyl donor, but not acyl-CoA or acyl-ACP. In Nitrosomonas europaea (strain ATCC 19718 / CIP 103999 / KCTC 2705 / NBRC 14298), this protein is Glycerol-3-phosphate acyltransferase.